The primary structure comprises 832 residues: Receptor-interacting serine/threonine-protein kinase 4 (832 aa).

A Protein kinase domain is found at F22–I286. ATP-binding positions include V28 to V36 and K51. A Glycyl lysine isopeptide (Lys-Gly) (interchain with G-Cter in ubiquitin) cross-link involves residue K51. The Proton acceptor role is filled by D143. Residue K145 forms a Glycyl lysine isopeptide (Lys-Gly) (interchain with G-Cter in ubiquitin) linkage. Disordered regions lie at residues Q325 to R368 and S389 to S424. Positions S329–V342 are enriched in acidic residues. Positions K343–S359 are enriched in basic and acidic residues. A compositionally biased stretch (low complexity) spans R403–S424. ANK repeat units follow at residues S485–L514, R518–A547, D551–E580, E584–L613, D617–A647, D651–V680, L684–A713, D717–A746, L750–D780, and Q782–L811.

This sequence belongs to the protein kinase superfamily. TKL Ser/Thr protein kinase family. In terms of assembly, interacts with PRKCB. Interacts with TRAF1, TRAF2, TRAF3 and TRAF5. Interacts with BIRC2/c-IAP1, BIRC3/c-IAP2 and XIAP/BIRC4. May be phosphorylated by MAP3K2 and MAP3K3. In terms of processing, proteolytically cleaved by during Fas-induced apoptosis. Cleavage at Asp-388 and Asp-426. Post-translationally, polyubiquitinated with 'Lys-48' and 'Lys-63'-linked chains by BIRC2/c-IAP1 and BIRC3/c-IAP2, leading to activation of NF-kappa-B. Expressed in hair follicles and skin.

The protein resides in the cytoplasm. It localises to the membrane. The enzyme catalyses L-seryl-[protein] + ATP = O-phospho-L-seryl-[protein] + ADP + H(+). It carries out the reaction L-threonyl-[protein] + ATP = O-phospho-L-threonyl-[protein] + ADP + H(+). Serine/threonine protein kinase. Required for embryonic skin development and correct skin homeostasis in adults, via phosphorylation of PKP1 and subsequent promotion of keratinocyte differentiation and cell adhesion. It is a direct transcriptional target of TP63. Plays a role in NF-kappa-B activation. The sequence is that of Receptor-interacting serine/threonine-protein kinase 4 (RIPK4) from Homo sapiens (Human).